The primary structure comprises 206 residues: MAPSHLSVREMREDEKPLVLEMLKAGVKDTENRVALHALTRPPALLLLAAASSGLRFVLASFALALLLPVFLAVAAMKLGLRARWGSLPPPGGLGGPWVAVRGSGDVCGVLALAPGSSAGDGARVTRLSVSRWHRRRGVGRRLLAFAESRARAWAGGMGEPRARLVVPVAVAAWGVAGMLEGCGYQAEGSWGCMGYTLVREFSKEL.

In terms of domain architecture, N-acetyltransferase spans 55-206; that stretch reads LRFVLASFAL…TLVREFSKEL (152 aa). The helical transmembrane segment at 57–77 threads the bilayer; it reads FVLASFALALLLPVFLAVAAM.

It belongs to the camello family.

It localises to the membrane. Probable acetyltransferase. In terms of biological role, may act as a transcription factor regulating the expression of coproporphyrinogen oxidase by binding to a promoter regulatory element. The sequence is that of Probable N-acetyltransferase 14 from Bos taurus (Bovine).